A 453-amino-acid chain; its full sequence is Serine/threonine-protein phosphatase 2A regulatory subunit B'' subunit gamma (453 aa).

EF-hand domains lie at 273-308 (PSAL…TMTN) and 341-376 (KEPA…IQEL). Residues Asp286, Asp288, Asn290, Met292, and Glu297 each coordinate Ca(2+).

Interacts with MCM3AP/GANP, PPP5C, and the phosphatase 2A core enzyme composed of the PPP2CA catalytic subunit and the constant regulatory subunit PPP2R1A. Finds in a complex with ABCB1, TFPI2 and PPP2R3C; leading to the dephosphorylation of ABCB1.

Its subcellular location is the nucleus. It is found in the cytoplasm. May regulate MCM3AP phosphorylation through phosphatase recruitment. May act as a negative regulator of ABCB1 expression and function through the dephosphorylation of ABCB1 by TFPI2/PPP2R3C complex. May play a role in the activation-induced cell death of B-cells. This chain is Serine/threonine-protein phosphatase 2A regulatory subunit B'' subunit gamma (PPP2R3C), found in Bos taurus (Bovine).